A 120-amino-acid polypeptide reads, in one-letter code: NADH dehydrogenase [ubiquinone] 1 subunit C2 (120 aa).

The residue at position 1 (M1) is an N-acetylmethionine. The chain crosses the membrane as a helical span at residues 57-76; sequence GLHRQLLYITSFVFVGYYLL.

This sequence belongs to the complex I NDUFC2 subunit family. Complex I is composed of 45 different subunits. Interacts with TMEM242. Post-translationally, there is a minor unacetylated form of subunit B14.5b.

It is found in the mitochondrion inner membrane. Its function is as follows. Accessory subunit of the mitochondrial membrane respiratory chain NADH dehydrogenase (Complex I), that is believed not to be involved in catalysis but required for the complex assembly. Complex I functions in the transfer of electrons from NADH to the respiratory chain. The immediate electron acceptor for the enzyme is believed to be ubiquinone. This is NADH dehydrogenase [ubiquinone] 1 subunit C2 from Bos taurus (Bovine).